We begin with the raw amino-acid sequence, 544 residues long: GMP synthase [glutamine-hydrolyzing] (544 aa).

Positions 12–210 (TILILDFGSQ…VKNVCGVRDG (199 aa)) constitute a Glutamine amidotransferase type-1 domain. C88 acts as the Nucleophile in catalysis. Catalysis depends on residues H184 and E186. In terms of domain architecture, GMPS ATP-PPase spans 211-419 (WSMESFIPKE…LNIPEHLVGR (209 aa)). Residue 239 to 245 (SGGVDST) coordinates ATP. R312, D481, K536, and E542 together coordinate XMP.

As to quaternary structure, homodimer. Also forms a small population of homotetramers. It depends on Mg(2+) as a cofactor.

It localises to the cytoplasm. The protein resides in the cytosol. It carries out the reaction XMP + L-glutamine + ATP + H2O = GMP + L-glutamate + AMP + diphosphate + 2 H(+). Its pathway is purine metabolism; GMP biosynthesis; GMP from XMP (L-Gln route): step 1/1. With respect to regulation, the enzyme is inhibited by ECC1385; although this compound fails to inhibit growth of the organism. Its function is as follows. Catalyzes the conversion of xanthine monophosphate (XMP) to GMP in the presence of glutamine and ATP through an adenyl-XMP intermediate. The protein is GMP synthase [glutamine-hydrolyzing] of Cryptococcus neoformans var. grubii serotype A (strain H99 / ATCC 208821 / CBS 10515 / FGSC 9487) (Filobasidiella neoformans var. grubii).